A 240-amino-acid polypeptide reads, in one-letter code: Glutathione S-transferase theta-1 (240 aa).

One can recognise a GST N-terminal domain in the interval 2 to 82; that stretch reads VLELYLDLLS…YLAHKYKVPD (81 aa). Glutathione contacts are provided by residues H40, 53 to 54, and 66 to 67; these read RV and ES. The region spanning 88 to 222 is the GST C-terminal domain; that stretch reads DLQARARVDE…VILKVKDCPP (135 aa).

The protein belongs to the GST superfamily. Theta family. As to quaternary structure, homodimer. As to expression, in liver, highest expression found in central vein limiting plate hepatocytes. Also expressed in interlobular bile duct epithelial cells. In lung, expressed in club cells and ciliated cells of the bronchiolar epithelium and in type II alveolar cells of the lung parenchyma.

Its subcellular location is the cytoplasm. It is found in the nucleus. It catalyses the reaction RX + glutathione = an S-substituted glutathione + a halide anion + H(+). Functionally, conjugation of reduced glutathione to a wide number of exogenous and endogenous hydrophobic electrophiles. Also binds steroids, bilirubin, carcinogens and numerous organic anions. Has dichloromethane dehalogenase activity. The polypeptide is Glutathione S-transferase theta-1 (Gstt1) (Mus musculus (Mouse)).